Consider the following 851-residue polypeptide: Beta-galactosidase BoGH2A (851 aa).

An N-terminal signal peptide occupies residues M1–S19. C20 carries the N-palmitoyl cysteine lipid modification. Residue C20 is the site of S-diacylglycerol cysteine attachment. Residue E437 is the Proton donor of the active site. E544 functions as the Nucleophile in the catalytic mechanism.

It belongs to the glycosyl hydrolase 2 family.

The protein resides in the cell inner membrane. It catalyses the reaction Hydrolysis of terminal non-reducing beta-D-galactose residues in beta-D-galactosides.. Its pathway is glucan metabolism; xyloglucan degradation. In terms of biological role, catalyzes the hydrolysis of terminal non-reducing beta-D-galactose residues in beta-D-galactosides in xyloglucan degradation, converting 'L' units to 'X' units. In Bacteroides ovatus (strain ATCC 8483 / DSM 1896 / JCM 5824 / BCRC 10623 / CCUG 4943 / NCTC 11153), this protein is Beta-galactosidase BoGH2A.